Consider the following 1007-residue polypeptide: Serine/threonine-protein kinase PRP4 homolog (1007 aa).

Polar residues predominate over residues 1-10 (MAAAETQSLR). The interval 1 to 99 (MAAAETQSLR…EGMSPAKRTK (99 aa)) is disordered. Ala2 carries the post-translational modification N-acetylalanine. Residues Ser8, Ser20, Ser23, and Ser32 each carry the phosphoserine modification. 2 stretches are compositionally biased toward basic residues: residues 39-59 (KHSRHKKKKHKHRSKHKKHKH) and 67-81 (KKHKHKHKHKKHKRK). Basic and acidic residues predominate over residues 82-91 (EIIDASDKEG). A phosphoserine mark is found at Ser87 and Ser93. Position 99 is an N6-acetyllysine; alternate (Lys99). Residue Lys99 forms a Glycyl lysine isopeptide (Lys-Gly) (interchain with G-Cter in SUMO2); alternate linkage. Lys111 participates in a covalent cross-link: Glycyl lysine isopeptide (Lys-Gly) (interchain with G-Cter in SUMO2). Lys117 is covalently cross-linked (Glycyl lysine isopeptide (Lys-Gly) (interchain with G-Cter in SUMO2); alternate). A Glycyl lysine isopeptide (Lys-Gly) (interchain with G-Cter in SUMO1); alternate cross-link involves residue Lys117. Ser131 carries the post-translational modification Phosphoserine. Tyr140 bears the Phosphotyrosine mark. Disordered stretches follow at residues 140 to 533 (YESG…EEED) and 559 to 583 (SNMSVPSEPSSPQSSTRTRSPSPDD). Phosphoserine occurs at positions 142, 144, and 166. A compositionally biased stretch (low complexity) spans 157–168 (GNRSSTRSSSTK). Residues Lys170 and Lys177 each participate in a glycyl lysine isopeptide (Lys-Gly) (interchain with G-Cter in SUMO2) cross-link. 2 stretches are compositionally biased toward basic residues: residues 179–202 (TTKKRSKSRSKERTRHRSDKKKSK) and 214–230 (RSKSKERKKSKSPSKRS). Residues Ser239, Ser241, Ser257, Ser277, Ser283, Ser292, and Ser294 each carry the phosphoserine modification. A compositionally biased stretch (basic and acidic residues) spans 247 to 270 (RSQEKIGKARSPTDDKVKIEDKSK). The segment covering 302-315 (SKDRRSRSKERKSK) has biased composition (basic residues). A compositionally biased stretch (basic and acidic residues) spans 316 to 325 (RSETDKEKKP). 5 positions are modified to phosphoserine: Ser328, Ser354, Ser356, Ser366, and Ser368. Basic residues predominate over residues 342–367 (PSRRPGRSPKRRSLSPKPRDKSRRSR). Phosphothreonine is present on Thr385. At Ser387 the chain carries Phosphoserine. Basic and acidic residues-rich tracts occupy residues 395–408 (RSLERKRREPERRR) and 415–429 (RPRDDILSRRERSKD). 3 positions are modified to phosphoserine: Ser427, Ser431, and Ser437. Residues 438–497 (PTRRRSRSPIRRRSRSPLRRSRSPRRRSRSPRRRDRGRRSRSRLRRRSRSRGGRRRRSRS) are compositionally biased toward basic residues. 7 positions are modified to phosphoserine: Ser518, Ser519, Ser520, Ser565, Ser569, Ser578, and Ser580. Residues 518 to 533 (SSSDDNLEDFDVEEED) show a composition bias toward acidic residues. Low complexity predominate over residues 562 to 581 (SVPSEPSSPQSSTRTRSPSP). Residues Lys593 and Lys659 each participate in a glycyl lysine isopeptide (Lys-Gly) (interchain with G-Cter in SUMO2) cross-link. One can recognise a Protein kinase domain in the interval 687-1006 (YNVYGYTGQG…ALQHAFIQEK (320 aa)). ATP contacts are provided by residues 693-701 (TGQGVFSNV) and Lys717. Lys717 carries the post-translational modification N6-acetyllysine. The active-site Proton acceptor is Asp815. A Phosphotyrosine modification is found at Tyr849. Residue Ser852 is modified to Phosphoserine.

This sequence belongs to the protein kinase superfamily. CMGC Ser/Thr protein kinase family. Interacts with CLK1 C-terminus. Associates with the U5 snRNP and NCOR1 deacetylase complexes. Identified in the spliceosome C complex. In terms of processing, phosphorylated by CLK1. Autophosphorylated; phosphorylation inhibits interaction with its targets, such as PRPF6 or SMARCA4. In terms of tissue distribution, ubiquitous.

The protein localises to the nucleus. It is found in the chromosome. Its subcellular location is the centromere. The protein resides in the kinetochore. The enzyme catalyses L-seryl-[protein] + ATP = O-phospho-L-seryl-[protein] + ADP + H(+). It catalyses the reaction L-threonyl-[protein] + ATP = O-phospho-L-threonyl-[protein] + ADP + H(+). In terms of biological role, serine/threonine kinase involved in spliceosomal assembly as well as mitosis and signaling regulation. Connects chromatin mediated regulation of transcription and pre-mRNA splicing. During spliceosomal assembly, interacts with and phosphorylates PRPF6 and PRPF31, components of the U4/U6-U5 tri-small nuclear ribonucleoprotein (snRNP), to facilitate the formation of the spliceosome B complex. Plays a role in regulating transcription and the spindle assembly checkpoint (SAC). Associates with U5 snRNP and NCOR1 deacetylase complexes which may allow a coordination of pre-mRNA splicing with chromatin remodeling events involved in transcriptional regulation. Associates and probably phosphorylates SMARCA4 and NCOR1. Phosphorylates SRSF1. Associates with kinetochores during mitosis and is necessary for recruitment and maintenance of the checkpoint proteins such as MAD1L1 and MAD12L1 at the kinetochores. Phosphorylates and regulates the activity of the transcription factors such as ELK1 and KLF13. Phosphorylates nuclear YAP1 and WWTR1/TAZ which induces nuclear exclusion and regulates Hippo signaling pathway, involved in tissue growth control. This chain is Serine/threonine-protein kinase PRP4 homolog, found in Homo sapiens (Human).